Reading from the N-terminus, the 269-residue chain is 5'-nucleotidase SurE (269 aa).

Residues D8, D9, S39, and N92 each coordinate a divalent metal cation.

The protein belongs to the SurE nucleotidase family. A divalent metal cation is required as a cofactor.

It is found in the cytoplasm. It carries out the reaction a ribonucleoside 5'-phosphate + H2O = a ribonucleoside + phosphate. Its function is as follows. Nucleotidase that shows phosphatase activity on nucleoside 5'-monophosphates. This is 5'-nucleotidase SurE from Psychrobacter cryohalolentis (strain ATCC BAA-1226 / DSM 17306 / VKM B-2378 / K5).